A 238-amino-acid chain; its full sequence is Probable transcriptional regulatory protein SPD_1725 (238 aa).

Belongs to the TACO1 family. YeeN subfamily.

The protein resides in the cytoplasm. In Streptococcus pneumoniae serotype 2 (strain D39 / NCTC 7466), this protein is Probable transcriptional regulatory protein SPD_1725.